We begin with the raw amino-acid sequence, 304 residues long: Tissue factor pathway inhibitor (304 aa).

The first 28 residues, 1–28 (MIYTMKKVHALWASVCLLLNLAPAPLNA), serve as a signal peptide directing secretion. O-linked (GalNAc...) threonine; partial glycosylation is present at threonine 42. BPTI/Kunitz inhibitor domains lie at 54 to 104 (CAFK…KKMC) and 125 to 175 (CFLE…KNIC). 6 disulfides stabilise this stretch: cysteine 54-cysteine 104, cysteine 63-cysteine 87, cysteine 79-cysteine 100, cysteine 125-cysteine 175, cysteine 134-cysteine 158, and cysteine 150-cysteine 171. The N-linked (GlcNAc...) asparagine glycan is linked to asparagine 145. An N-linked (GlcNAc...) asparagine glycan is attached at asparagine 195. The O-linked (GalNAc...) serine; partial glycan is linked to serine 202. A glycan (O-linked (GalNAc...) threonine) is linked at threonine 203. The BPTI/Kunitz inhibitor 3 domain maps to 217-267 (CLTPADRGLCRANENRFYYNSVIGKCRPFKYSGCGGNENNFTSKQECLRAC). 3 disulfides stabilise this stretch: cysteine 217–cysteine 267, cysteine 226–cysteine 250, and cysteine 242–cysteine 263.

In terms of processing, O-glycosylated. Mostly in endothelial cells.

The protein resides in the secreted. The protein localises to the microsome membrane. Inhibits factor X (X(a)) directly and, in a Xa-dependent way, inhibits VIIa/tissue factor activity, presumably by forming a quaternary Xa/LACI/VIIa/TF complex. It possesses an antithrombotic action and also the ability to associate with lipoproteins in plasma. The polypeptide is Tissue factor pathway inhibitor (TFPI) (Homo sapiens (Human)).